The following is a 174-amino-acid chain: uncharacterized protein (174 aa).

The tract at residues 138–174 (VNLTSKSSGRSDEEGTTRRAPVLKTRADFVSRKDKHR) is disordered. Residues 162 to 174 (TRADFVSRKDKHR) show a composition bias toward basic and acidic residues.

This is an uncharacterized protein from Bos taurus (Bovine).